Consider the following 500-residue polypeptide: NAD(P)H-quinone oxidoreductase chain 4, chloroplastic (500 aa).

The next 14 membrane-spanning stretches (helical) occupy residues 4–24 (FPWL…IFFL), 37–57 (ICIC…HFQL), 87–107 (IGPI…AWPV), 113–130 (LFHF…GSFS), 134–154 (LLLF…LLSM), 167–187 (FILY…GIGL), 207–227 (IALE…KSPI), 242–262 (HYST…YGLV), 272–292 (AHSL…IYAA), 305–325 (IAYS…SITD), 330–350 (GAIL…FLAG), 386–406 (LALP…GIIT), 411–431 (FLMA…LTPI), and 462–482 (LFVS…PDFL).

Belongs to the complex I subunit 4 family.

The protein resides in the plastid. The protein localises to the chloroplast thylakoid membrane. The catalysed reaction is a plastoquinone + NADH + (n+1) H(+)(in) = a plastoquinol + NAD(+) + n H(+)(out). It catalyses the reaction a plastoquinone + NADPH + (n+1) H(+)(in) = a plastoquinol + NADP(+) + n H(+)(out). The sequence is that of NAD(P)H-quinone oxidoreductase chain 4, chloroplastic from Carica papaya (Papaya).